The chain runs to 103 residues: Putative glutaredoxin-C12 (103 aa).

Residues M1–W102 form the Glutaredoxin domain. A disulfide bond links C21 and C24.

This sequence belongs to the glutaredoxin family. CC-type subfamily.

It localises to the cytoplasm. Has a glutathione-disulfide oxidoreductase activity in the presence of NADPH and glutathione reductase. Reduces low molecular weight disulfides and proteins. The polypeptide is Putative glutaredoxin-C12 (GRXC12) (Arabidopsis thaliana (Mouse-ear cress)).